Reading from the N-terminus, the 545-residue chain is Glucose-6-phosphate isomerase (545 aa).

E349 functions as the Proton donor in the catalytic mechanism. Active-site residues include H380 and K509.

This sequence belongs to the GPI family.

It localises to the cytoplasm. The enzyme catalyses alpha-D-glucose 6-phosphate = beta-D-fructose 6-phosphate. It functions in the pathway carbohydrate biosynthesis; gluconeogenesis. The protein operates within carbohydrate degradation; glycolysis; D-glyceraldehyde 3-phosphate and glycerone phosphate from D-glucose: step 2/4. Its function is as follows. Catalyzes the reversible isomerization of glucose-6-phosphate to fructose-6-phosphate. The polypeptide is Glucose-6-phosphate isomerase (Chelativorans sp. (strain BNC1)).